A 216-amino-acid polypeptide reads, in one-letter code: MIITIDGPSGTGKSTVAKALAQRLKFNYCNTGAMYRTLAYTHLQEPWNCLSIQELIDNPPFSFSFISEQPLEAFLDGHRLSEELGTQEVANAASRLSQLPEVRSFMHKLQRKYAELGNCVFEGRDMGSKVFPDADVKIFLTASAEVRALRRLKDLPKGSLSQEALHAELVKRDEADSRRIHDPLVIPEGAIVLDSSDLTISQVLEKILALVSPEMP.

An ATP-binding site is contributed by 7-15; sequence GPSGTGKST.

It belongs to the cytidylate kinase family. Type 1 subfamily.

It localises to the cytoplasm. It carries out the reaction CMP + ATP = CDP + ADP. The enzyme catalyses dCMP + ATP = dCDP + ADP. The polypeptide is Cytidylate kinase (Chlamydia felis (strain Fe/C-56) (Chlamydophila felis)).